The chain runs to 178 residues: CDP-archaeol synthase (178 aa).

Transmembrane regions (helical) follow at residues 7-27 (LFVSFWFILPAYTANAMACIF), 56-76 (FFGVFFGIVTAIIQYLVSNLG), 91-111 (VIIGFLLSFGALFGDMFGSFL), 125-145 (VLDQITFIVFALIFVSYYYLV), and 149-169 (ISITLLILSPVVHILSNIIAY).

The protein belongs to the CDP-archaeol synthase family. Mg(2+) serves as cofactor.

The protein localises to the cell membrane. The enzyme catalyses 2,3-bis-O-(geranylgeranyl)-sn-glycerol 1-phosphate + CTP + H(+) = CDP-2,3-bis-O-(geranylgeranyl)-sn-glycerol + diphosphate. It participates in membrane lipid metabolism; glycerophospholipid metabolism. Its function is as follows. Catalyzes the formation of CDP-2,3-bis-(O-geranylgeranyl)-sn-glycerol (CDP-archaeol) from 2,3-bis-(O-geranylgeranyl)-sn-glycerol 1-phosphate (DGGGP) and CTP. This reaction is the third ether-bond-formation step in the biosynthesis of archaeal membrane lipids. The sequence is that of CDP-archaeol synthase from Methanococcus vannielii (strain ATCC 35089 / DSM 1224 / JCM 13029 / OCM 148 / SB).